The sequence spans 313 residues: N-acetyl-gamma-glutamyl-phosphate reductase 2 (313 aa).

The active site involves Cys117.

It belongs to the NAGSA dehydrogenase family. Type 2 subfamily.

The protein resides in the cytoplasm. It carries out the reaction N-acetyl-L-glutamate 5-semialdehyde + phosphate + NADP(+) = N-acetyl-L-glutamyl 5-phosphate + NADPH + H(+). The protein operates within amino-acid biosynthesis; L-arginine biosynthesis; N(2)-acetyl-L-ornithine from L-glutamate: step 3/4. Its function is as follows. Catalyzes the NADPH-dependent reduction of N-acetyl-5-glutamyl phosphate to yield N-acetyl-L-glutamate 5-semialdehyde. The sequence is that of N-acetyl-gamma-glutamyl-phosphate reductase 2 from Pseudomonas putida (strain ATCC 47054 / DSM 6125 / CFBP 8728 / NCIMB 11950 / KT2440).